The chain runs to 136 residues: Monothiol glutaredoxin-S3 (136 aa).

Residues 18-135 enclose the Glutaredoxin domain; sequence EREVRRAVEE…PVLKQAGALW (118 aa). A [2Fe-2S] cluster-binding site is contributed by Cys38. Positions 133–136 match the Responsive for interaction with TGA factors motif; sequence ALWL.

This sequence belongs to the glutaredoxin family. CC-type subfamily.

It is found in the cytoplasm. The protein localises to the nucleus. May only reduce GSH-thiol disulfides, but not protein disulfides. This chain is Monothiol glutaredoxin-S3 (GRXS3), found in Oryza sativa subsp. japonica (Rice).